A 461-amino-acid polypeptide reads, in one-letter code: Protein-serine O-palmitoleoyltransferase porcupine (461 aa).

The Cytoplasmic portion of the chain corresponds to 1–17 (MATFSRQEFFQQLLQGC). A helical membrane pass occupies residues 18 to 38 (LLPTVQQGLDQIWLLLTICFA). Topologically, residues 39–66 (CRLLWRLGLPSYLKHASTVAGGFFSLYH) are extracellular. Residues 67 to 87 (FFQLHMVWVVLLSLLCYLVLF) form a helical membrane-spanning segment. Residues 88–95 (LCRHSSHR) lie on the Cytoplasmic side of the membrane. The chain crosses the membrane as a helical span at residues 96-116 (GVFLSVTILIYLLMGEMHMVD). At 117–152 (TVTWHKMRGAQMIVAMKAVSLGFDLDRGEVGAVPSP) the chain is on the extracellular side. The helical transmembrane segment at 153-173 (VEFMGYLYFVGTIVFGPWISF) threads the bilayer. Residues 174 to 198 (HSYLQAVQGRPLSRRWLKKVARSLA) lie on the Cytoplasmic side of the membrane. The chain crosses the membrane as a helical span at residues 199–219 (LALLCLVLSTCVGPYLFPYFI). Residues 220 to 252 (PLDGDRLLRNKKRKARGTMVRWLRAYESAVSFH) are Extracellular-facing. A helical membrane pass occupies residues 253–273 (FSNYFVGFLSEATATLAGAGF). Residues 274–337 (TEEKDHLEWD…SAVLVTYAAS (64 aa)) are Cytoplasmic-facing. A helical transmembrane segment spans residues 338 to 358 (ALLHGFSFHLAAVLLSLAFIT). Residue histidine 341 is part of the active site. Residues 359–396 (YVEHVLRKRLAQILSACILSKRCLPDCSHRHRLGLGVR) lie on the Extracellular side of the membrane. Residues 397–417 (ALNLLFGALAIFHLSYLGSLF) traverse the membrane as a helical segment. At 418–461 (DVDVDDTTEEQGYGMAYTVHKWSELSWASHWVTFGCWIFYRLIG) the chain is on the cytoplasmic side.

Belongs to the membrane-bound acyltransferase family. Porcupine subfamily. In terms of assembly, interacts with WNT1, WNT3, WNT3A, WNT4, WNT5A, WNT5B, WNT6, WNT7A and WNT7B. In terms of tissue distribution, expressed in brain, heart, kidney, liver, lung, muscle, spleen and testis. Isoform 4 is strongly expressed in kidney, liver, lung, spleen and testis. Isoform 1 is strongly expressed in brain, heart and muscle and poorly in kidney, liver, lung, spleen and testis.

Its subcellular location is the endoplasmic reticulum membrane. It catalyses the reaction [Wnt protein]-L-serine + (9Z)-hexadecenoyl-CoA = [Wnt protein]-O-(9Z)-hexadecenoyl-L-serine + CoA. Its function is as follows. Protein-serine O-palmitoleoyltransferase that acts as a key regulator of the Wnt signaling pathway by mediating the attachment of palmitoleate, a 16-carbon monounsaturated fatty acid (C16:1(9Z)), to Wnt proteins. Serine palmitoleoylation of WNT proteins is required for efficient binding to frizzled receptors. The polypeptide is Protein-serine O-palmitoleoyltransferase porcupine (Mus musculus (Mouse)).